A 285-amino-acid polypeptide reads, in one-letter code: Nucleotide-binding protein PSPTO_4456 (285 aa).

8-15 lines the ATP pocket; that stretch reads GRSGSGKS. 60–63 provides a ligand contact to GTP; that stretch reads DARN.

This sequence belongs to the RapZ-like family.

Displays ATPase and GTPase activities. The chain is Nucleotide-binding protein PSPTO_4456 from Pseudomonas syringae pv. tomato (strain ATCC BAA-871 / DC3000).